The primary structure comprises 504 residues: Cytochrome P450 monooxygenase gsfF (504 aa).

The N-terminal stretch at 1-16 (MTVLFILSAGLVAVFG) is a signal peptide. N-linked (GlcNAc...) asparagine glycosylation is found at Asn-97 and Asn-150. Residue Cys-450 participates in heme binding.

The protein belongs to the cytochrome P450 family. Heme serves as cofactor.

It carries out the reaction griseophenone B + reduced [NADPH--hemoprotein reductase] + O2 + H(+) = desmethyl-dehydrogriseofulvin + oxidized [NADPH--hemoprotein reductase] + 2 H2O. The protein operates within secondary metabolite biosynthesis; terpenoid biosynthesis. Its function is as follows. Cytochrome P450 monooxygenase; part of the gene cluster that mediates the biosynthesis of griseofulvin, an important antifungal drug that has been in use for a long time for treating dermatophyte infections. The first step of the pathway is the formation of the heptaketide backbone by gsfA which is initiated by priming with acetyl-CoA, followed by sequential condensations of 6 malonyl-CoA units. The resulting benzophenone can undergo a spontaneous dehydration to form norlichexanthone. However, the true precursor for the griseofulvin biosynthesis is not norlichexanthone, but the heptaketide benzophenone that is O-methylated at 3-OH by gsfB to produce griseophenone D which is further methylated at 9-OH by gsfC to yield griseophenone C. Griseophenone C is then substrate of halogenase gsfI which is responsible for the regio-specific chlorination at the C13 position to form griseophenone B. The cytochrome P450 gsfF catalyzes the coupling of orcinol and phloroglucinol rings in griseophenone B to form desmethyl-dehydrogriseofulvin A which is further methylated at 5-OH by gsfD to yield dehydrogriseofulvin. Finally, gsfE performs stereospecific reduction of enone 18 of dehydrogriseofulvin to afford the final product griseofulvin. The chain is Cytochrome P450 monooxygenase gsfF from Penicillium aethiopicum.